We begin with the raw amino-acid sequence, 124 residues long: Large ribosomal subunit protein bL12 (124 aa).

The protein belongs to the bacterial ribosomal protein bL12 family. Homodimer. Part of the ribosomal stalk of the 50S ribosomal subunit. Forms a multimeric L10(L12)X complex, where L10 forms an elongated spine to which 2 to 4 L12 dimers bind in a sequential fashion. Binds GTP-bound translation factors.

In terms of biological role, forms part of the ribosomal stalk which helps the ribosome interact with GTP-bound translation factors. Is thus essential for accurate translation. This is Large ribosomal subunit protein bL12 from Sulfurovum sp. (strain NBC37-1).